Consider the following 829-residue polypeptide: pre-rRNA 2'-O-ribose RNA methyltransferase FTSJ3 (829 aa).

S-adenosyl-L-methionine-binding residues include Gly-56, Trp-58, Asp-76, Asp-92, and Asp-117. Lys-157 serves as the catalytic Proton acceptor. The interval 332–367 is disordered; the sequence is ISLSSEEEGDEEESAAETKQASEEEEEREEEEQLNR. 5 positions are modified to phosphoserine: Ser-333, Ser-335, Ser-336, Ser-345, and Ser-353. The span at 336-346 shows a compositional bias: acidic residues; it reads SEEEGDEEESA. Positions 354 to 363 are enriched in acidic residues; that stretch reads EEEEEREEEE. Arg-389 carries the post-translational modification Citrulline. Disordered regions lie at residues 443–508 and 528–634; these read FLSD…PLLV and DGFS…GFEV. Positions 456 to 473 are enriched in acidic residues; sequence DAEDDDDTSLESDLDPEE. 2 positions are modified to phosphoserine: Ser-531 and Ser-544. Residue Lys-570 forms a Glycyl lysine isopeptide (Lys-Gly) (interchain with G-Cter in SUMO2) linkage. At Ser-575 the chain carries Phosphoserine. Glycyl lysine isopeptide (Lys-Gly) (interchain with G-Cter in SUMO2) cross-links involve residues Lys-626 and Lys-642. At Ser-659 the chain carries Phosphoserine. A Glycyl lysine isopeptide (Lys-Gly) (interchain with G-Cter in SUMO2) cross-link involves residue Lys-661. Ser-671 is subject to Phosphoserine. Lys-693 is covalently cross-linked (Glycyl lysine isopeptide (Lys-Gly) (interchain with G-Cter in SUMO2)). Positions 722–760 form a coiled coil; it reads IKKVAEAKARKKRRMLKKLEQTKKKAEAVVNTVDISERE. Arg-766 carries the citrulline modification. The segment covering 794–804 has biased composition (basic residues); the sequence is VRRPAGVRGHF. The tract at residues 794–829 is disordered; that stretch reads VRRPAGVRGHFKVVDSRMKKDQRAQRKEQKRNHRRK. A compositionally biased stretch (basic and acidic residues) spans 805-820; the sequence is KVVDSRMKKDQRAQRK.

Belongs to the class I-like SAM-binding methyltransferase superfamily. RNA methyltransferase RlmE family. SPB1 subfamily. In terms of assembly, interacts with NIP7. Citrullinated by PADI4.

The protein resides in the nucleus. It localises to the nucleolus. The enzyme catalyses a ribonucleotide in rRNA + S-adenosyl-L-methionine = a 2'-O-methylribonucleotide in rRNA + S-adenosyl-L-homocysteine + H(+). In terms of biological role, RNA 2'-O-methyltransferase involved in the processing of the 34S pre-rRNA to 18S rRNA and in 40S ribosomal subunit formation. This chain is pre-rRNA 2'-O-ribose RNA methyltransferase FTSJ3 (Ftsj3), found in Rattus norvegicus (Rat).